The sequence spans 470 residues: UDP-N-acetylmuramoylalanine--D-glutamate ligase (470 aa).

ATP is bound at residue 121–127 (GTNGKST).

It belongs to the MurCDEF family.

The protein resides in the cytoplasm. The enzyme catalyses UDP-N-acetyl-alpha-D-muramoyl-L-alanine + D-glutamate + ATP = UDP-N-acetyl-alpha-D-muramoyl-L-alanyl-D-glutamate + ADP + phosphate + H(+). The protein operates within cell wall biogenesis; peptidoglycan biosynthesis. Its function is as follows. Cell wall formation. Catalyzes the addition of glutamate to the nucleotide precursor UDP-N-acetylmuramoyl-L-alanine (UMA). The polypeptide is UDP-N-acetylmuramoylalanine--D-glutamate ligase (Rhizobium etli (strain ATCC 51251 / DSM 11541 / JCM 21823 / NBRC 15573 / CFN 42)).